Here is a 650-residue protein sequence, read N- to C-terminus: Putative polypeptide N-acetylgalactosaminyltransferase 9 (650 aa).

Residues 1–11 lie on the Cytoplasmic side of the membrane; sequence MAFIWRRRSTT. The helical; Signal-anchor for type II membrane protein transmembrane segment at 12–31 threads the bilayer; sequence IVKLVAFALAIWFCIAFLVY. At 32–650 the chain is on the lumenal side; the sequence is TDDTRRRAAQ…TLENYDSSKL (619 aa). The interval 84–154 is disordered; sequence NVIGGGGQKQ…NPGELGKPVR (71 aa). Over residues 107–136 the composition is skewed to basic and acidic residues; it reads HKADLQAERMRKKAAEQPKKKPQEDSKKVI. Intrachain disulfides connect C198/C432, C423/C499, C535/C554, C577/C590, and C616/C631. The interval 208-317 is catalytic subdomain A; sequence LPKTDVIICF…EGWLEPLLDR (110 aa). Substrate is bound by residues C216, D249, and R278. D301 is a binding site for Mn(2+). The substrate site is built by S302 and H303. H303 contributes to the Mn(2+) binding site. 2 N-linked (GlcNAc...) asparagine glycosylation sites follow: N321 and N373. Positions 378 to 440 are catalytic subdomain B; it reads PVYSPTMAGG…PCSHVGHIFR (63 aa). Mn(2+) is bound at residue H437. Residues R440 and Y445 each coordinate substrate. A Ricin B-type lectin domain is found at 521–643; it reads AHGEIRNLGY…SLSRQQWTLE (123 aa).

It belongs to the glycosyltransferase 2 family. GalNAc-T subfamily. As to quaternary structure, isoform A forms homotetramer. Isoform B forms homodimer. It depends on Mn(2+) as a cofactor.

It localises to the golgi apparatus membrane. It carries out the reaction L-seryl-[protein] + UDP-N-acetyl-alpha-D-galactosamine = a 3-O-[N-acetyl-alpha-D-galactosaminyl]-L-seryl-[protein] + UDP + H(+). The enzyme catalyses L-threonyl-[protein] + UDP-N-acetyl-alpha-D-galactosamine = a 3-O-[N-acetyl-alpha-D-galactosaminyl]-L-threonyl-[protein] + UDP + H(+). Its pathway is protein modification; protein glycosylation. Its function is as follows. Catalyzes the initial reaction in O-linked oligosaccharide biosynthesis, the transfer of an N-acetyl-D-galactosamine residue to a serine or threonine residue on the protein receptor. It can both act as a peptide transferase that transfers GalNAc onto unmodified peptide substrates, and as a glycopeptide transferase that requires the prior addition of a GalNAc on a peptide before adding additional GalNAc moieties. In terms of biological role, N-acetylgalactosaminyltransferase which preferentially O-glycosylates negatively charge substrates. O-glycosylates mucin-like protein Sgs3 in the salivary gland but to a lesser extent than isoform B. By regulating the O-glycosylation of secretory cargo proteins plays a role in the morphology and maturation of salivary gland secretory granules. Functionally, N-acetylgalactosaminyltransferase which preferentially O-glycosylates positively charge substrates. O-glycosylates mucin-like protein Sgs3 in the salivary gland. By regulating the O-glycosylation of secretory cargo proteins, plays a role in the morphology and maturation of salivary gland secretory granules. This is Putative polypeptide N-acetylgalactosaminyltransferase 9 from Drosophila melanogaster (Fruit fly).